Consider the following 375-residue polypeptide: Lipid-A-disaccharide synthase (375 aa).

This sequence belongs to the LpxB family.

The catalysed reaction is a lipid X + a UDP-2-N,3-O-bis[(3R)-3-hydroxyacyl]-alpha-D-glucosamine = a lipid A disaccharide + UDP + H(+). Its pathway is bacterial outer membrane biogenesis; LPS lipid A biosynthesis. Condensation of UDP-2,3-diacylglucosamine and 2,3-diacylglucosamine-1-phosphate to form lipid A disaccharide, a precursor of lipid A, a phosphorylated glycolipid that anchors the lipopolysaccharide to the outer membrane of the cell. This chain is Lipid-A-disaccharide synthase, found in Pseudomonas putida (strain ATCC 700007 / DSM 6899 / JCM 31910 / BCRC 17059 / LMG 24140 / F1).